Here is a 377-residue protein sequence, read N- to C-terminus: Erythronate-4-phosphate dehydrogenase (377 aa).

Substrate is bound by residues S45 and T66. NAD(+)-binding residues include D146 and T175. R208 is a catalytic residue. Residue D232 coordinates NAD(+). The active site involves E237. The active-site Proton donor is the H254. G257 is a binding site for NAD(+). Y258 serves as a coordination point for substrate.

Belongs to the D-isomer specific 2-hydroxyacid dehydrogenase family. PdxB subfamily. Homodimer.

It is found in the cytoplasm. It catalyses the reaction 4-phospho-D-erythronate + NAD(+) = (R)-3-hydroxy-2-oxo-4-phosphooxybutanoate + NADH + H(+). Its pathway is cofactor biosynthesis; pyridoxine 5'-phosphate biosynthesis; pyridoxine 5'-phosphate from D-erythrose 4-phosphate: step 2/5. In terms of biological role, catalyzes the oxidation of erythronate-4-phosphate to 3-hydroxy-2-oxo-4-phosphonooxybutanoate. The sequence is that of Erythronate-4-phosphate dehydrogenase from Sodalis glossinidius (strain morsitans).